A 329-amino-acid chain; its full sequence is Bifunctional nuclease 2 (329 aa).

The BFN domain occupies 121 to 256 (CVHNNPQGGN…YLAYSDGMRV (136 aa)). Residues 287-322 (DTKEFDLVRNMMQAVDEERYDEAAEWRDKLGKFQAK) form the UVR domain.

Belongs to the bifunctional nuclease family.

It localises to the nucleus. Bifunctional nuclease with both RNase and DNase activities. Involved in basal defense response. Participates in abscisic acid-derived callose deposition following infection by a necrotrophic pathogen. This chain is Bifunctional nuclease 2 (BBD2), found in Arabidopsis thaliana (Mouse-ear cress).